The chain runs to 144 residues: Maximins 8/H7 (144 aa).

The N-terminal stretch at 1-18 (MKFKYIVAVSFLIASAYA) is a signal peptide. The propeptide occupies 19-43 (RSEENDEQSLSQRDVLEEESLREIR). Asparagine 70 carries the asparagine amide modification. The propeptide occupies 74 to 123 (TAEDHEVMKRLEAVMRDLDSLDYPEEASERETRGFNQEEIANLFTKKEKR). At leucine 143 the chain carries Leucine amide.

The protein belongs to the bombinin family. As to expression, expressed by the skin glands.

The protein localises to the secreted. In terms of biological role, maximin-8 shows antimicrobial activity against bacteria and against the fungus C.albicans. It has little hemolytic activity. Its function is as follows. Maximin-H7 shows antimicrobial activity against bacteria and against the fungus C.albicans. Shows strong hemolytic activity. The protein is Maximins 8/H7 of Bombina maxima (Giant fire-bellied toad).